The primary structure comprises 290 residues: Arylamine N-acetyltransferase 1 (290 aa).

Position 1 is an N-acetylmethionine (Met-1). Cys-68 serves as the catalytic Acyl-thioester intermediate. Residue Ser-103 coordinates CoA. 106-107 (VH) contacts substrate. Active-site residues include His-107 and Asp-122. Tyr-208 provides a ligand contact to CoA.

It belongs to the arylamine N-acetyltransferase family.

It localises to the cytoplasm. It carries out the reaction an arylamine + acetyl-CoA = an N-acetylarylamine + CoA. Its function is as follows. Participates in the detoxification of a plethora of hydrazine and arylamine drugs. Isoniazid, 2-aminofluorene and anisidine are preferred substrates for NAT-1. No activity with p-aminobenzoic acid (PABA) nor SMZ. The chain is Arylamine N-acetyltransferase 1 (Nat1) from Mus musculus (Mouse).